The chain runs to 79 residues: UPF0401 protein YkfF (79 aa).

It belongs to the UPF0401 family.

The polypeptide is UPF0401 protein YkfF (ykfF) (Escherichia coli (strain K12)).